Reading from the N-terminus, the 147-residue chain is Lysozyme C (147 aa).

The first 17 residues, 1–17 (MRSLLILVLCFLPLAAP), serve as a signal peptide directing secretion. Residues 19–147 (KVYGRCELAA…VNVWIRGCRL (129 aa)) enclose the C-type lysozyme domain. Cystine bridges form between C24–C145, C48–C133, C82–C98, and C94–C112. Residues E53 and D70 contribute to the active site.

Belongs to the glycosyl hydrolase 22 family. In terms of assembly, monomer. In terms of processing, by an evolutionary shift in the site of proteolytic cleavage of prelysozyme, Gly-18 became the N-terminal residue of the mature protein instead of being the C-terminal residue of the signal sequence as in other birds.

It is found in the secreted. It catalyses the reaction Hydrolysis of (1-&gt;4)-beta-linkages between N-acetylmuramic acid and N-acetyl-D-glucosamine residues in a peptidoglycan and between N-acetyl-D-glucosamine residues in chitodextrins.. Its function is as follows. Lysozymes have primarily a bacteriolytic function; those in tissues and body fluids are associated with the monocyte-macrophage system and enhance the activity of immunoagents. This chain is Lysozyme C (LYZ), found in Phasianus colchicus colchicus (Black-necked pheasant).